A 205-amino-acid chain; its full sequence is Large ribosomal subunit protein uL4 (205 aa).

A disordered region spans residues Arg-43–Asn-95. Over residues Ala-48–His-57 the composition is skewed to basic and acidic residues. A compositionally biased stretch (basic residues) spans Ser-58–Gly-69.

The protein belongs to the universal ribosomal protein uL4 family. As to quaternary structure, part of the 50S ribosomal subunit.

Its function is as follows. One of the primary rRNA binding proteins, this protein initially binds near the 5'-end of the 23S rRNA. It is important during the early stages of 50S assembly. It makes multiple contacts with different domains of the 23S rRNA in the assembled 50S subunit and ribosome. Forms part of the polypeptide exit tunnel. The polypeptide is Large ribosomal subunit protein uL4 (Bordetella pertussis (strain Tohama I / ATCC BAA-589 / NCTC 13251)).